The primary structure comprises 103 residues: Large ribosomal subunit protein bL21 (103 aa).

Belongs to the bacterial ribosomal protein bL21 family. As to quaternary structure, part of the 50S ribosomal subunit. Contacts protein L20.

Functionally, this protein binds to 23S rRNA in the presence of protein L20. This chain is Large ribosomal subunit protein bL21, found in Acidovorax ebreus (strain TPSY) (Diaphorobacter sp. (strain TPSY)).